We begin with the raw amino-acid sequence, 100 residues long: MKQEKLSLNDVLIRPIITEKALILREQRKYVFEVNPLANKNLVKEAVEKLFNVKVEKVNILNMKPKPKRRGIFEGKTRSWKKAVVTLKEGYTIKELEGEH.

The protein belongs to the universal ribosomal protein uL23 family. In terms of assembly, part of the 50S ribosomal subunit. Contacts protein L29, and trigger factor when it is bound to the ribosome.

Functionally, one of the early assembly proteins it binds 23S rRNA. One of the proteins that surrounds the polypeptide exit tunnel on the outside of the ribosome. Forms the main docking site for trigger factor binding to the ribosome. The protein is Large ribosomal subunit protein uL23 of Thermotoga sp. (strain RQ2).